Reading from the N-terminus, the 94-residue chain is MANHASADKRNRQRITRTARNRAIKSELRTTVKKARTALKGVPQESAAPVTAAVSALDRAASKGTIPAKRASRVKSRLALALHKASVAAKTAAS.

Basic and acidic residues predominate over residues 1 to 10; it reads MANHASADKR. The disordered stretch occupies residues 1–20; it reads MANHASADKRNRQRITRTAR. The segment covering 11-20 has biased composition (basic residues); that stretch reads NRQRITRTAR.

The protein belongs to the bacterial ribosomal protein bS20 family.

In terms of biological role, binds directly to 16S ribosomal RNA. The protein is Small ribosomal subunit protein bS20 of Sorangium cellulosum (strain So ce56) (Polyangium cellulosum (strain So ce56)).